The primary structure comprises 698 residues: DNA ligase (698 aa).

NAD(+) is bound by residues 40–44 (DGEYD), 89–90 (SL), and E123. Residue K125 is the N6-AMP-lysine intermediate of the active site. Residues R146, E184, K300, and K324 each contribute to the NAD(+) site. The Zn(2+) site is built by C418, C421, C436, and C442. Residues 620-698 (AGDSPLAGKT…EAEFRAMSGG (79 aa)) enclose the BRCT domain.

Belongs to the NAD-dependent DNA ligase family. LigA subfamily. The cofactor is Mg(2+). Requires Mn(2+) as cofactor.

The enzyme catalyses NAD(+) + (deoxyribonucleotide)n-3'-hydroxyl + 5'-phospho-(deoxyribonucleotide)m = (deoxyribonucleotide)n+m + AMP + beta-nicotinamide D-nucleotide.. Its function is as follows. DNA ligase that catalyzes the formation of phosphodiester linkages between 5'-phosphoryl and 3'-hydroxyl groups in double-stranded DNA using NAD as a coenzyme and as the energy source for the reaction. It is essential for DNA replication and repair of damaged DNA. In Rhodospirillum rubrum (strain ATCC 11170 / ATH 1.1.1 / DSM 467 / LMG 4362 / NCIMB 8255 / S1), this protein is DNA ligase.